Here is a 549-residue protein sequence, read N- to C-terminus: GPI mannosyltransferase 3 (549 aa).

Residues 1-39 (MAYNNSVRKRKKDIQDANGFHRDQTIDKKSRATNKLEES) lie on the Cytoplasmic side of the membrane. A helical transmembrane segment spans residues 40–60 (LPTFKVFIVLFFIRLLNSLTI). Over 61–119 (KTFFQADEYYQCLEPAYNFVFGSGYITWEWEEGIRSSIHPLIYALGYKMVSYVHFDDKP) the chain is Lumenal. The chain crosses the membrane as a helical span at residues 120–140 (IILIPKVIGALIASIGEVYLY). The Cytoplasmic segment spans residues 141–154 (KFSKKFTKNEKLAR). A helical transmembrane segment spans residues 155–175 (LTLILSLLSPFNWYIITRSFS). Over 176-205 (NSFEMVLTTIAFTYWPWDNVISYKDISMSC) the chain is Lumenal. A helical membrane pass occupies residues 206–226 (IIAFISCIVRPTNGIIWLYLG). Topologically, residues 227-246 (INFMIKNYKLEKQSGKLMKL) are cytoplasmic. A helical transmembrane segment spans residues 247 to 267 (ILILSIELILILLVNTGLDYI). Topologically, residues 268–289 (FYGKTTFPLYNFVEFNVIRNLS) are lumenal. An N-linked (GlcNAc...) asparagine glycan is attached at asparagine 287. Residues 290–310 (IFYGVAPWHFYLFQGVPIILM) traverse the membrane as a helical segment. The Cytoplasmic portion of the chain corresponds to 311-328 (TYLPWLLHSAIVLKKYKS). Residues 329–349 (LLGQVAILMIGGFSLIDHKEI) traverse the membrane as a helical segment. A topological domain (lumenal) is located at residue arginine 350. A helical membrane pass occupies residues 351-367 (FIYPLQPIFMLMVAYSI). At 368-379 (HETKHKFQRLYK) the chain is on the cytoplasmic side. The helical transmembrane segment at 380–400 (FLVPVIIILNLIIAIFFTQVH) threads the bilayer. Residues 401-549 (ERGVIDIVQY…KGDIIVYCQI (149 aa)) lie on the Lumenal side of the membrane. An N-linked (GlcNAc...) asparagine glycan is attached at asparagine 442.

It belongs to the glycosyltransferase 22 family. PIGB subfamily.

It localises to the endoplasmic reticulum membrane. The protein operates within glycolipid biosynthesis; glycosylphosphatidylinositol-anchor biosynthesis. In terms of biological role, mannosyltransferase involved in glycosylphosphatidylinositol-anchor biosynthesis. Transfers the third mannose to Man2-GlcN-acyl-PI during GPI precursor assembly. The polypeptide is GPI mannosyltransferase 3 (GPI10) (Debaryomyces hansenii (strain ATCC 36239 / CBS 767 / BCRC 21394 / JCM 1990 / NBRC 0083 / IGC 2968) (Yeast)).